The following is a 510-amino-acid chain: Glutamyl-tRNA(Gln) amidotransferase subunit A (510 aa).

Active-site charge relay system residues include lysine 82 and serine 157. Serine 181 serves as the catalytic Acyl-ester intermediate.

The protein belongs to the amidase family. GatA subfamily. In terms of assembly, heterotrimer of A, B and C subunits.

It carries out the reaction L-glutamyl-tRNA(Gln) + L-glutamine + ATP + H2O = L-glutaminyl-tRNA(Gln) + L-glutamate + ADP + phosphate + H(+). Functionally, allows the formation of correctly charged Gln-tRNA(Gln) through the transamidation of misacylated Glu-tRNA(Gln) in organisms which lack glutaminyl-tRNA synthetase. The reaction takes place in the presence of glutamine and ATP through an activated gamma-phospho-Glu-tRNA(Gln). In Bordetella avium (strain 197N), this protein is Glutamyl-tRNA(Gln) amidotransferase subunit A.